The primary structure comprises 466 residues: Zinc finger and SCAN domain-containing protein 26 (466 aa).

Residue lysine 21 forms a Glycyl lysine isopeptide (Lys-Gly) (interchain with G-Cter in SUMO2) linkage. Positions 42-124 (CKQFRQLRYE…GILEDLQLDR (83 aa)) constitute an SCAN box domain. 2 stretches are compositionally biased toward basic and acidic residues: residues 124–135 (RGKAGEQKDSAQ) and 163–173 (KPEERGKETRS). The segment at 124-182 (RGKAGEQKDSAQRSRPTVLVGEPAPRREAREQPGCALPQKPEERGKETRSENGNLIAGT) is disordered. A C2H2-type 1; degenerate zinc finger spans residues 220–242 (SQCLETKERLVQNSGLIEHDRAH). 7 consecutive C2H2-type zinc fingers follow at residues 270–292 (HPCQECGKVFQRSSHLIRHQKIH), 298–320 (YQCKECGKVFSQNAGLLEHLRIH), 326–348 (YLCIHCGKNFRRSSHLNRHQKIH), 354–376 (RECKECGKTFSRALLLTHHQRVH), 382–404 (HHCNECGKAFSLTSDLIRHHRIH), 410–432 (FKCNVCQKAFRLNSHLDQHVRIH), and 438–460 (YKCSECNEAFRQKSGLFQHQRHH).

It is found in the nucleus. In terms of biological role, may be involved in transcriptional regulation. In Mus musculus (Mouse), this protein is Zinc finger and SCAN domain-containing protein 26 (Zscan26).